Consider the following 266-residue polypeptide: MATVPEPINEVMAYYSDENELLFEADGPKQMKSCTQHLDLGSMGDGNIQLQISHQLYNKSFRQVVSVIVAMEKLRSRAYEHVFRDDDLRSILSFIFEEEPVIFETSSDELLCDAAVQSVKCKLQDREQKSLVLDSPCVLKALHLLSQEMSREVVFCMSFVQGEERDNKIPVALGIRDKNLYLSWVKKGDTPTLQLEEVDPKVYPKRNMEKRFVFYKTEIKNTVEFESVLYPNWYISTSQIEEKPVFLGHFRGGQDITDFRMETLSP.

Positions 1–113 (MATVPEPINE…ETSSDELLCD (113 aa)) are excised as a propeptide.

It belongs to the IL-1 family. Monomer. In its precursor form, weakly interacts with full-length MEFV; the mature cytokine does not interact at all. Interacts with integrins ITGAV:ITGBV and ITGA5:ITGB1; integrin-binding is required for IL1B signaling. Interacts with cargo receptor TMED10; the interaction is direct and is required for the secretion of IL1B mature form. Interacts with HSP90AB1; the interaction facilitates cargo translocation into the ERGIC. Interacts with HSP90B1; the interaction facilitates cargo translocation into the ERGIC.

Its subcellular location is the cytoplasm. The protein localises to the cytosol. The protein resides in the secreted. It is found in the lysosome. It localises to the extracellular exosome. In terms of biological role, potent pro-inflammatory cytokine. Initially discovered as the major endogenous pyrogen, induces prostaglandin synthesis, neutrophil influx and activation, T-cell activation and cytokine production, B-cell activation and antibody production, and fibroblast proliferation and collagen production. Promotes Th17 differentiation of T-cells. Synergizes with IL12/interleukin-12 to induce IFNG synthesis from T-helper 1 (Th1) cells. Plays a role in angiogenesis by inducing VEGF production synergistically with TNF and IL6. Involved in transduction of inflammation downstream of pyroptosis: its mature form is specifically released in the extracellular milieu by passing through the gasdermin-D (GSDMD) pore. This Capra hircus (Goat) protein is Interleukin-1 beta (IL1B).